Consider the following 101-residue polypeptide: NADH-quinone oxidoreductase subunit K (101 aa).

The next 3 membrane-spanning stretches (helical) occupy residues 4 to 24, 30 to 50, and 61 to 81; these read LGYF…GIII, IVLL…FIAF, and IFVF…LAIL.

It belongs to the complex I subunit 4L family. As to quaternary structure, NDH-1 is composed of 14 different subunits. Subunits NuoA, H, J, K, L, M, N constitute the membrane sector of the complex.

Its subcellular location is the cell inner membrane. It catalyses the reaction a quinone + NADH + 5 H(+)(in) = a quinol + NAD(+) + 4 H(+)(out). NDH-1 shuttles electrons from NADH, via FMN and iron-sulfur (Fe-S) centers, to quinones in the respiratory chain. The immediate electron acceptor for the enzyme in this species is believed to be ubiquinone. Couples the redox reaction to proton translocation (for every two electrons transferred, four hydrogen ions are translocated across the cytoplasmic membrane), and thus conserves the redox energy in a proton gradient. The chain is NADH-quinone oxidoreductase subunit K from Coxiella burnetii (strain CbuG_Q212) (Coxiella burnetii (strain Q212)).